The primary structure comprises 900 residues: Trehalose-phosphatase (900 aa).

Disordered stretches follow at residues 76–109 (SRLFNSKNRDKSENGEKGENDLHAKEEREKEEDP) and 874–900 (VKHSDSSIRSEQASARYAMKRQQSYKN). Basic and acidic residues predominate over residues 82-108 (KNRDKSENGEKGENDLHAKEEREKEED).

In the C-terminal section; belongs to the trehalose phosphatase family. This sequence in the N-terminal section; belongs to the glycosyltransferase 20 family. Requires Mg(2+) as cofactor.

It catalyses the reaction alpha,alpha-trehalose 6-phosphate + H2O = alpha,alpha-trehalose + phosphate. The protein operates within carbohydrate biosynthesis. Functionally, phosphatase catalytic subunit of the trehalose synthase complex that catalyzes the production of trehalose from glucose-6-phosphate and UDP-alpha-D-glucose in a two step process. In Zygosaccharomyces rouxii, this protein is Trehalose-phosphatase.